The sequence spans 2167 residues: Papilin (2167 aa).

Positions 1–19 (MRLLLFSAALLLCSVPTWA) are cleaved as a signal peptide. The TSP type-1 1 domain maps to 76–123 (TGNWGPWVPENECSRSCGGGVQLEKRQCSGDCTGASVRYISCNLNACE). Intrachain disulfides connect cysteine 88/cysteine 117, cysteine 92/cysteine 122, and cysteine 103/cysteine 107. N-linked (GlcNAc...) asparagine glycosylation is present at asparagine 268. 3 TSP type-1 domains span residues 341-402 (VDYM…VDCE), 404-459 (EWFT…TCNR), and 461-525 (ACPE…GPCE). 3 disulfides stabilise this stretch: cysteine 353–cysteine 396, cysteine 357–cysteine 401, and cysteine 368–cysteine 382. Residues asparagine 386 and asparagine 445 are each glycosylated (N-linked (GlcNAc...) asparagine). N-linked (GlcNAc...) asparagine glycosylation is found at asparagine 541, asparagine 568, and asparagine 638. TSP type-1 domains lie at 585–643 (CEYE…TNEE) and 645–702 (CTGT…DDCP). 8 N-linked (GlcNAc...) asparagine glycosylation sites follow: asparagine 715, asparagine 729, asparagine 741, asparagine 814, asparagine 820, asparagine 857, asparagine 933, and asparagine 1090. Disulfide bonds link cysteine 1089/cysteine 1141, cysteine 1099/cysteine 1124, cysteine 1116/cysteine 1137, cysteine 1150/cysteine 1202, cysteine 1161/cysteine 1185, and cysteine 1177/cysteine 1198. BPTI/Kunitz inhibitor domains follow at residues 1089–1141 (CNQT…ETIC) and 1150–1202 (CYLP…SMFC). The tract at residues 1239 to 1273 (QSAEQPQPQQPQQQQQQQQQQPQQPRQSMEDICRS) is disordered. A compositionally biased stretch (low complexity) spans 1243-1263 (QPQPQQPQQQQQQQQQQPQQP). 3 disulfides stabilise this stretch: cysteine 1271–cysteine 1321, cysteine 1280–cysteine 1304, and cysteine 1296–cysteine 1317. A BPTI/Kunitz inhibitor 3 domain is found at 1271–1321 (CRSRQDAGPCETYSDQWFYNAFSQECETFTYGGCGGNLNRFRSKDECEQRC). The tract at residues 1332–1365 (ARQEQAQPAAQPAQPAQPSNIVSPPQQSASPVVV) is disordered. Intrachain disulfides connect cysteine 1375/cysteine 1425, cysteine 1384/cysteine 1408, cysteine 1400/cysteine 1421, cysteine 1447/cysteine 1497, cysteine 1456/cysteine 1480, cysteine 1472/cysteine 1493, cysteine 1504/cysteine 1554, cysteine 1513/cysteine 1537, and cysteine 1529/cysteine 1550. BPTI/Kunitz inhibitor domains are found at residues 1375–1425 (CHLN…ESLC), 1447–1497 (CDEA…KAAC), and 1504–1554 (CQLP…QARC). Residues 1556–1615 (KDDQTTTTSQPEELPSLPLVQEDPQPRPAFSLKQSFAHSRRRDAPFARSVSARHHTPDSE) form a disordered region. Intrachain disulfides connect cysteine 1621-cysteine 1671, cysteine 1630-cysteine 1654, cysteine 1646-cysteine 1667, cysteine 1731-cysteine 1781, cysteine 1740-cysteine 1764, cysteine 1756-cysteine 1777, cysteine 1790-cysteine 1840, cysteine 1799-cysteine 1823, and cysteine 1815-cysteine 1836. BPTI/Kunitz inhibitor domains lie at 1621–1671 (CYAV…ETSC), 1731–1781 (CMLP…ERAC), and 1790–1840 (CELP…ESLC). Residue asparagine 1848 is glycosylated (N-linked (GlcNAc...) asparagine). Disulfide bonds link cysteine 1853/cysteine 1903, cysteine 1862/cysteine 1886, cysteine 1878/cysteine 1899, cysteine 1914/cysteine 1964, cysteine 1923/cysteine 1947, and cysteine 1939/cysteine 1960. BPTI/Kunitz inhibitor domains lie at 1853–1903 (CTLE…QQSC) and 1914–1964 (CTLR…FRRC). Residues asparagine 1992, asparagine 2087, and asparagine 2133 are each glycosylated (N-linked (GlcNAc...) asparagine). The disordered stretch occupies residues 2075–2106 (RTTSRPMLTPSKNFSLGTPPTPSPSTVSTTPF). Residues 2078–2090 (SRPMLTPSKNFSL) are compositionally biased toward polar residues. One can recognise a PLAC domain in the interval 2124-2163 (TSNSCMDVGNASTCDLIVKNGLCGKKRYGTFCCHTCTRVH).

It belongs to the papilin family. Localizes to the basement membranes of the gonad primordium, pharynx and intestine (at protein level). Expressed in head and CAN neurons, coelomocytes, body-wall muscles and anal depressor and sphincter and stomatointestinal muscles. Expressed Isoform a: is expressed in body wall muscles and distal cell tips. Isoform b: expressed in embryonic muscles.

The protein resides in the secreted. The protein localises to the extracellular space. It is found in the extracellular matrix. It localises to the basement membrane. Functionally, involved in pharynx morphogenesis probably by remodeling the basement membrane. Plays a role in embryogenesis, the second phase of distal cell tip migration and is required for distribution of the metalloproteinase, mig-17, during organogenesis. Its function is as follows. Plays a role in post embryonic distal cell tip migration. Essential extracellular matrix (ECM) protein required for hypodermal enclosure in the embryo. In Caenorhabditis elegans, this protein is Papilin (mig-6).